The sequence spans 833 residues: Leucine--tRNA ligase (833 aa).

Residues 41-52 (PYPSGAGLHVGH) carry the 'HIGH' region motif. The 'KMSKS' region signature appears at 610–614 (KMSKS). K613 provides a ligand contact to ATP.

It belongs to the class-I aminoacyl-tRNA synthetase family.

The protein localises to the cytoplasm. It catalyses the reaction tRNA(Leu) + L-leucine + ATP = L-leucyl-tRNA(Leu) + AMP + diphosphate. In Streptococcus uberis (strain ATCC BAA-854 / 0140J), this protein is Leucine--tRNA ligase.